A 158-amino-acid polypeptide reads, in one-letter code: Transcription elongation factor GreA (158 aa).

Positions 4-75 (QKQYPMTQEG…QRVENMLRNA (72 aa)) form a coiled coil.

The protein belongs to the GreA/GreB family.

Functionally, necessary for efficient RNA polymerase transcription elongation past template-encoded arresting sites. The arresting sites in DNA have the property of trapping a certain fraction of elongating RNA polymerases that pass through, resulting in locked ternary complexes. Cleavage of the nascent transcript by cleavage factors such as GreA or GreB allows the resumption of elongation from the new 3'terminus. GreA releases sequences of 2 to 3 nucleotides. In Staphylococcus saprophyticus subsp. saprophyticus (strain ATCC 15305 / DSM 20229 / NCIMB 8711 / NCTC 7292 / S-41), this protein is Transcription elongation factor GreA.